The chain runs to 211 residues: ATP-dependent Clp protease proteolytic subunit (211 aa).

The active-site Nucleophile is the serine 114. Histidine 139 is a catalytic residue.

This sequence belongs to the peptidase S14 family. In terms of assembly, fourteen ClpP subunits assemble into 2 heptameric rings which stack back to back to give a disk-like structure with a central cavity, resembling the structure of eukaryotic proteasomes.

It localises to the cytoplasm. It catalyses the reaction Hydrolysis of proteins to small peptides in the presence of ATP and magnesium. alpha-casein is the usual test substrate. In the absence of ATP, only oligopeptides shorter than five residues are hydrolyzed (such as succinyl-Leu-Tyr-|-NHMec, and Leu-Tyr-Leu-|-Tyr-Trp, in which cleavage of the -Tyr-|-Leu- and -Tyr-|-Trp bonds also occurs).. In terms of biological role, cleaves peptides in various proteins in a process that requires ATP hydrolysis. Has a chymotrypsin-like activity. Plays a major role in the degradation of misfolded proteins. This chain is ATP-dependent Clp protease proteolytic subunit, found in Pseudomonas fluorescens (strain ATCC BAA-477 / NRRL B-23932 / Pf-5).